A 379-amino-acid polypeptide reads, in one-letter code: Cobalt-precorrin-5B C(1)-methyltransferase (379 aa).

It belongs to the CbiD family.

The catalysed reaction is Co-precorrin-5B + S-adenosyl-L-methionine = Co-precorrin-6A + S-adenosyl-L-homocysteine. The protein operates within cofactor biosynthesis; adenosylcobalamin biosynthesis; cob(II)yrinate a,c-diamide from sirohydrochlorin (anaerobic route): step 6/10. Functionally, catalyzes the methylation of C-1 in cobalt-precorrin-5B to form cobalt-precorrin-6A. The sequence is that of Cobalt-precorrin-5B C(1)-methyltransferase from Salmonella heidelberg (strain SL476).